The sequence spans 562 residues: Glycine betaine/proline/choline/ectoine transporter VP1456 (562 aa).

12 helical membrane passes run 68-88 (PVFGISAGLVVFCLISLLLVE), 110-130 (FFMWSTNFFLLFAVGLLFSPL), 147-167 (VSWLSMLFAAGMGIGLLFWSV), 203-223 (WGVHGWSIYALVALALAFFAF), 243-263 (AWGWLGHVIDILAVLSTLFGL), 287-307 (GIGTQMVVIAFVTFIAVLSVV), 322-342 (MIVAFALLIFITFITFDTAMG), 373-393 (WTVFYWAWWVSWSPFVGMFIA), 404-424 (FLFAVIVIPTLVTLVWMSVFG), 456-476 (VLPYSSVISILSIVLILVFFI), 503-523 (IFWACIEGSIAAVMLWVGGKE), and 531-551 (GVVATGLPFTFVLLLMCVSLV).

The protein belongs to the BCCT transporter (TC 2.A.15) family.

The protein localises to the cell inner membrane. Functionally, involved in the uptake of osmoprotectants. Can transport glycine betaine, proline, choline and ectoine. The chain is Glycine betaine/proline/choline/ectoine transporter VP1456 from Vibrio parahaemolyticus serotype O3:K6 (strain RIMD 2210633).